Reading from the N-terminus, the 367-residue chain is DNA replication and repair protein RecF (367 aa).

ATP is bound at residue 30-37; that stretch reads GANGSGKT.

The protein belongs to the RecF family.

Its subcellular location is the cytoplasm. Its function is as follows. The RecF protein is involved in DNA metabolism; it is required for DNA replication and normal SOS inducibility. RecF binds preferentially to single-stranded, linear DNA. It also seems to bind ATP. The protein is DNA replication and repair protein RecF of Pseudomonas fluorescens (strain ATCC BAA-477 / NRRL B-23932 / Pf-5).